The sequence spans 451 residues: uncharacterized protein (451 aa).

One can recognise a TRAM domain in the interval 2–60 (VVKVKQKIPLKIKRMGINGEGIGFYQKTLVFVPGALKGENIFCQITAVKRNFAEAKLLT). The [4Fe-4S] cluster site is built by Cys73, Cys79, Cys82, and Cys162. Residues Gln283, Tyr312, Asp333, and Asp381 each coordinate S-adenosyl-L-methionine. The Nucleophile role is filled by Cys408.

It belongs to the class I-like SAM-binding methyltransferase superfamily. RNA M5U methyltransferase family.

This is an uncharacterized protein from Streptococcus pyogenes serotype M3 (strain ATCC BAA-595 / MGAS315).